Consider the following 359-residue polypeptide: Histamine H2 receptor (359 aa).

Residues 1 to 22 (MAFNGTVPSFCMDFTVYKVTIS) are Extracellular-facing. Residue Asn-4 is glycosylated (N-linked (GlcNAc...) asparagine). Residues 23–44 (VILIILILVTVAGNVVVCLAVG) form a helical membrane-spanning segment. The Cytoplasmic portion of the chain corresponds to 45-57 (LNRRLRSLTNCFI). The helical transmembrane segment at 58–81 (VSLAVTDLLLGLLVLPFSAIYQLS) threads the bilayer. At 82-92 (CKWSFSKVFCN) the chain is on the extracellular side. An intrachain disulfide couples Cys-91 to Cys-174. Residues 93–114 (IYTSLDVMLCTASILNLFMISL) traverse the membrane as a helical segment. Residues 115–134 (DRYCAVTDPLRYPVLITPAR) are Cytoplasmic-facing. A helical membrane pass occupies residues 135-159 (VAISLVFIWVISITLSFLSIHLGWN). Topologically, residues 160 to 180 (SRNETSKDNDTIVKCKVQVNE) are extracellular. Residues 181–204 (VYGLVDGLVTFYLPLLIMCITYFR) traverse the membrane as a helical segment. Residues 205–234 (IFKIAREQARRINHIGSWKAATIREHKATV) lie on the Cytoplasmic side of the membrane. A helical transmembrane segment spans residues 235-258 (TLAAVMGAFIICWFPYFTVFVYRG). Topologically, residues 259-267 (LKGDDAVNE) are extracellular. Residues 268–289 (VFEDVVLWLGYANSALNPILYA) form a helical membrane-spanning segment. Residues 290-359 (ALNRDFRTAY…VTAPQGATNR (70 aa)) are Cytoplasmic-facing. Residue Cys-305 is the site of S-palmitoyl cysteine attachment.

Belongs to the G-protein coupled receptor 1 family.

The protein localises to the cell membrane. Its function is as follows. The H2 subclass of histamine receptors mediates gastric acid secretion. The activity of this receptor is mediated by G proteins which activate adenylyl cyclase. In Cavia porcellus (Guinea pig), this protein is Histamine H2 receptor (HRH2).